Consider the following 468-residue polypeptide: 3-isopropylmalate dehydratase large subunit (468 aa).

[4Fe-4S] cluster is bound by residues Cys-349, Cys-409, and Cys-412.

The protein belongs to the aconitase/IPM isomerase family. LeuC type 1 subfamily. In terms of assembly, heterodimer of LeuC and LeuD. It depends on [4Fe-4S] cluster as a cofactor.

It carries out the reaction (2R,3S)-3-isopropylmalate = (2S)-2-isopropylmalate. It functions in the pathway amino-acid biosynthesis; L-leucine biosynthesis; L-leucine from 3-methyl-2-oxobutanoate: step 2/4. In terms of biological role, catalyzes the isomerization between 2-isopropylmalate and 3-isopropylmalate, via the formation of 2-isopropylmaleate. The sequence is that of 3-isopropylmalate dehydratase large subunit from Shewanella baltica (strain OS155 / ATCC BAA-1091).